Here is a 376-residue protein sequence, read N- to C-terminus: Putative glutamate--cysteine ligase 2-3 (376 aa).

The protein belongs to the glutamate--cysteine ligase type 2 family. YbdK subfamily.

It carries out the reaction L-cysteine + L-glutamate + ATP = gamma-L-glutamyl-L-cysteine + ADP + phosphate + H(+). Functionally, ATP-dependent carboxylate-amine ligase which exhibits weak glutamate--cysteine ligase activity. The chain is Putative glutamate--cysteine ligase 2-3 from Nocardioides sp. (strain ATCC BAA-499 / JS614).